Reading from the N-terminus, the 275-residue chain is Putative phosphoenolpyruvate synthase regulatory protein (275 aa).

153–160 (GVSRTGKT) contacts ADP.

This sequence belongs to the pyruvate, phosphate/water dikinase regulatory protein family. PSRP subfamily.

It catalyses the reaction [pyruvate, water dikinase] + ADP = [pyruvate, water dikinase]-phosphate + AMP + H(+). It carries out the reaction [pyruvate, water dikinase]-phosphate + phosphate + H(+) = [pyruvate, water dikinase] + diphosphate. In terms of biological role, bifunctional serine/threonine kinase and phosphorylase involved in the regulation of the phosphoenolpyruvate synthase (PEPS) by catalyzing its phosphorylation/dephosphorylation. This Nitrosomonas europaea (strain ATCC 19718 / CIP 103999 / KCTC 2705 / NBRC 14298) protein is Putative phosphoenolpyruvate synthase regulatory protein.